Here is a 344-residue protein sequence, read N- to C-terminus: Biotin synthase (344 aa).

Residues 65–290 (PEVEVEGIIS…RTMLRFAGGR (226 aa)) form the Radical SAM core domain. Residues cysteine 80, cysteine 84, and cysteine 87 each contribute to the [4Fe-4S] cluster site. Residues cysteine 123, cysteine 156, cysteine 215, and arginine 285 each contribute to the [2Fe-2S] cluster site.

This sequence belongs to the radical SAM superfamily. Biotin synthase family. As to quaternary structure, homodimer. It depends on [4Fe-4S] cluster as a cofactor. Requires [2Fe-2S] cluster as cofactor.

The catalysed reaction is (4R,5S)-dethiobiotin + (sulfur carrier)-SH + 2 reduced [2Fe-2S]-[ferredoxin] + 2 S-adenosyl-L-methionine = (sulfur carrier)-H + biotin + 2 5'-deoxyadenosine + 2 L-methionine + 2 oxidized [2Fe-2S]-[ferredoxin]. It participates in cofactor biosynthesis; biotin biosynthesis; biotin from 7,8-diaminononanoate: step 2/2. Functionally, catalyzes the conversion of dethiobiotin (DTB) to biotin by the insertion of a sulfur atom into dethiobiotin via a radical-based mechanism. The sequence is that of Biotin synthase from Mycolicibacterium paratuberculosis (strain ATCC BAA-968 / K-10) (Mycobacterium paratuberculosis).